Reading from the N-terminus, the 503-residue chain is Protein ERGIC-53-like (503 aa).

A signal peptide spans 1-25; the sequence is MLKTGGLSPSLCLLSLLLALHSAER. The Lumenal segment spans residues 26-439; the sequence is SYPPPQRRFE…WLPGFSTCLR (414 aa). In terms of domain architecture, L-type lectin-like spans 32-253; sequence RRFEYKLSFK…DVLSFLTFSL (222 aa). A disulfide bridge connects residues Cys177 and Cys216. The chain crosses the membrane as a helical span at residues 440–460; sequence TSIFLFFLLIQTVGFFCYMNF. Residues 461-503 are Cytoplasmic-facing; it reads RQELDKRLQEYLFTESISLQPALPIPRTIGVLRRQPVSPSMQA.

In terms of tissue distribution, predominantly expressed in the sublingual salivary gland, in the mucous cells of the acini, but not in the serous cells, nor in the duct system (at protein level). Not detected in the submandilar, nor the parotid glands. Expressed in the mucous glands, but not detected in the serous glands (at protein level). Besides the salivary glands, expressed in the Brunner's glands in the duodenum, but no other mucous or serous glands (at protein level).

It is found in the endoplasmic reticulum-Golgi intermediate compartment membrane. The chain is Protein ERGIC-53-like (Lman1l) from Rattus norvegicus (Rat).